The sequence spans 321 residues: Aspartate carbamoyltransferase catalytic subunit (321 aa).

The carbamoyl phosphate site is built by R70 and T71. K98 contacts L-aspartate. Carbamoyl phosphate-binding residues include R120, H148, and Q151. Positions 181 and 235 each coordinate L-aspartate. Residues G276 and P277 each coordinate carbamoyl phosphate.

This sequence belongs to the aspartate/ornithine carbamoyltransferase superfamily. ATCase family. Heterododecamer (2C3:3R2) of six catalytic PyrB chains organized as two trimers (C3), and six regulatory PyrI chains organized as three dimers (R2).

The catalysed reaction is carbamoyl phosphate + L-aspartate = N-carbamoyl-L-aspartate + phosphate + H(+). Its pathway is pyrimidine metabolism; UMP biosynthesis via de novo pathway; (S)-dihydroorotate from bicarbonate: step 2/3. Catalyzes the condensation of carbamoyl phosphate and aspartate to form carbamoyl aspartate and inorganic phosphate, the committed step in the de novo pyrimidine nucleotide biosynthesis pathway. The sequence is that of Aspartate carbamoyltransferase catalytic subunit from Gluconacetobacter diazotrophicus (strain ATCC 49037 / DSM 5601 / CCUG 37298 / CIP 103539 / LMG 7603 / PAl5).